The chain runs to 212 residues: External core antigen (212 aa).

The signal sequence occupies residues M1–A19. The interval G25 to L27 is HBEAG. The tract at residues N165–C212 is disordered. Residues V178–S205 are compositionally biased toward basic residues. One copy of the 1; half-length repeat lies at S184–P190. Positions S184 to Q206 are 3 X 8 AA repeats of S-P-R-R-R-R-S-Q. Residues S184–C212 constitute a propeptide that is removed on maturation. Repeat copies occupy residues S191 to Q198 and S199 to Q206.

The protein belongs to the orthohepadnavirus precore antigen family. As to quaternary structure, homodimerizes. Phosphorylated. Post-translationally, cleaved by host furin.

It is found in the secreted. It localises to the host nucleus. Functionally, may regulate immune response to the intracellular capsid in acting as a T-cell tolerogen, by having an immunoregulatory effect which prevents destruction of infected cells by cytotoxic T-cells. This immune regulation may predispose to chronicity during perinatal infections and prevent severe liver injury during adult infections. In Hepatitis B virus genotype F2 subtype adw4q (isolate Senegal/9203) (HBV-F), this protein is External core antigen.